The primary structure comprises 239 residues: tRNA (guanine-N(7)-)-methyltransferase (239 aa).

Glu-69, Glu-94, Asp-121, and Asp-144 together coordinate S-adenosyl-L-methionine. Residue Asp-144 is part of the active site. Lys-148 serves as a coordination point for substrate. Residues 150 to 155 (RHNKRR) form an interaction with RNA region. Substrate-binding positions include Asp-180 and 217-220 (TKFE).

This sequence belongs to the class I-like SAM-binding methyltransferase superfamily. TrmB family. Monomer.

The enzyme catalyses guanosine(46) in tRNA + S-adenosyl-L-methionine = N(7)-methylguanosine(46) in tRNA + S-adenosyl-L-homocysteine. The protein operates within tRNA modification; N(7)-methylguanine-tRNA biosynthesis. In terms of biological role, catalyzes the formation of N(7)-methylguanine at position 46 (m7G46) in tRNA. The polypeptide is tRNA (guanine-N(7)-)-methyltransferase (Salmonella typhi).